The primary structure comprises 900 residues: Probable beta-mannosidase (900 aa).

An N-terminal signal peptide occupies residues 1-21 (MRTSLVVCLFWLLFQLHTTHG). 3 N-linked (GlcNAc...) asparagine glycosylation sites follow: Asn-38, Asn-42, and Asn-131. Glu-463 (proton donor) is an active-site residue. N-linked (GlcNAc...) asparagine glycans are attached at residues Asn-477, Asn-576, Asn-661, and Asn-738.

This sequence belongs to the glycosyl hydrolase 2 family.

It localises to the lysosome. It carries out the reaction Hydrolysis of terminal, non-reducing beta-D-mannose residues in beta-D-mannosides.. The sequence is that of Probable beta-mannosidase from Caenorhabditis elegans.